Here is a 270-residue protein sequence, read N- to C-terminus: uncharacterized protein (270 aa).

Residues Met1 to Gly22 form the signal peptide. A lipid anchor (N-palmitoyl cysteine) is attached at Cys23. The S-diacylglycerol cysteine moiety is linked to residue Cys23.

Belongs to the staphylococcal tandem lipoprotein family.

Its subcellular location is the cell membrane. This is an uncharacterized protein from Staphylococcus aureus (strain NCTC 8325 / PS 47).